We begin with the raw amino-acid sequence, 657 residues long: PAN2-PAN3 deadenylation complex subunit PAN3 (657 aa).

3 disordered regions span residues 1 to 29 (MASA…HAKD), 52 to 98 (HDPS…SATI), and 115 to 135 (SRSN…EWSI). The segment at 27 to 55 (AKDTLCRNVTIYGRCRYEDKGCVFNHDPS) adopts a C3H1-type zinc-finger fold. The segment covering 52-67 (HDPSRVNDAQHPERSS) has biased composition (basic and acidic residues). Polar residues-rich tracts occupy residues 75-98 (DSPS…SATI) and 115-132 (SRSN…STPE). The tract at residues 259 to 521 (QTLPNSQLPT…TIDIFISGIS (263 aa)) is pseudokinase domain. Residues R311, 360 to 367 (DYHPLSKT), and 421 to 422 (SK) contribute to the ATP site. A coiled-coil region spans residues 522 to 560 (SQLMSTFDSSLHLDDQLISDLSRELENARLVRLLTKLNF). The segment at 561-657 (INERPEYEHD…QALLKPARRI (97 aa)) is knob domain.

This sequence belongs to the protein kinase superfamily. PAN3 family. As to quaternary structure, homodimer. Forms a heterotrimer with a catalytic subunit PAN2 to form the poly(A)-nuclease (PAN) deadenylation complex. Interacts (via PAM-2 motif) with poly(A)-binding protein PAB1 (via PABC domain), conferring substrate specificity of the enzyme complex.

The protein localises to the cytoplasm. Regulatory subunit of the poly(A)-nuclease (PAN) deadenylation complex, one of two cytoplasmic mRNA deadenylases involved in mRNA turnover. PAN specifically shortens poly(A) tails of RNA and the activity is stimulated by poly(A)-binding protein PAB1. PAN deadenylation is followed by rapid degradation of the shortened mRNA tails by the CCR4-NOT complex. Deadenylated mRNAs are then degraded by two alternative mechanisms, namely exosome-mediated 3'-5' exonucleolytic degradation, or deadenylation-dependent mRNA decaping and subsequent 5'-3' exonucleolytic degradation by XRN1. May also be involved in post-transcriptional maturation of mRNA poly(A) tails. PAN3 acts as a positive regulator for PAN activity, recruiting the catalytic subunit PAN2 to mRNA via its interaction with RNA and with PAB1. This Coccidioides immitis (strain RS) (Valley fever fungus) protein is PAN2-PAN3 deadenylation complex subunit PAN3.